A 494-amino-acid chain; its full sequence is Transcriptional regulator of yeast form adherence 3 (494 aa).

Residues 1 to 360 form the SPX domain; that stretch reads MKFAKTLERT…SLGIQKTFPK (360 aa). Residues 398–437 form an RING-type zinc finger; sequence CPICMNIAYKPIRLSCGHLFCVRCLVKMKQDDKTSCPLCR.

The protein resides in the nucleus. Transcription factor required for yeast cell adherence to silicone substrate. The polypeptide is Transcriptional regulator of yeast form adherence 3 (TRY3) (Candida albicans (strain SC5314 / ATCC MYA-2876) (Yeast)).